Here is a 469-residue protein sequence, read N- to C-terminus: 3-isopropylmalate dehydratase large subunit (469 aa).

[4Fe-4S] cluster is bound by residues cysteine 347, cysteine 410, and cysteine 413.

Belongs to the aconitase/IPM isomerase family. LeuC type 1 subfamily. In terms of assembly, heterodimer of LeuC and LeuD. [4Fe-4S] cluster is required as a cofactor.

The catalysed reaction is (2R,3S)-3-isopropylmalate = (2S)-2-isopropylmalate. The protein operates within amino-acid biosynthesis; L-leucine biosynthesis; L-leucine from 3-methyl-2-oxobutanoate: step 2/4. In terms of biological role, catalyzes the isomerization between 2-isopropylmalate and 3-isopropylmalate, via the formation of 2-isopropylmaleate. The chain is 3-isopropylmalate dehydratase large subunit from Ralstonia nicotianae (strain ATCC BAA-1114 / GMI1000) (Ralstonia solanacearum).